Consider the following 75-residue polypeptide: MSRISLGVKEVTVIPREEAKELLKRMKLRPWQLPWIRASDPLAQKAGAKPGDVLKIVRESPTAGEAVVYRLVVPG.

It belongs to the archaeal Rpo5/eukaryotic RPB5 RNA polymerase subunit family. In terms of assembly, part of the RNA polymerase complex.

The protein localises to the cytoplasm. The catalysed reaction is RNA(n) + a ribonucleoside 5'-triphosphate = RNA(n+1) + diphosphate. In terms of biological role, DNA-dependent RNA polymerase (RNAP) catalyzes the transcription of DNA into RNA using the four ribonucleoside triphosphates as substrates. The sequence is that of DNA-directed RNA polymerase subunit Rpo5 from Pyrobaculum aerophilum (strain ATCC 51768 / DSM 7523 / JCM 9630 / CIP 104966 / NBRC 100827 / IM2).